Here is a 457-residue protein sequence, read N- to C-terminus: Multidrug resistance protein MdtK (457 aa).

12 consecutive transmembrane segments (helical) span residues 11–31 (LLAL…MGVV), 53–73 (IWLP…PIIA), 93–113 (WLAI…KFLI), 127–147 (AVGF…YQVL), 160–180 (GMVI…IFIY), 188–208 (LGGV…FLLM), 243–263 (LPIA…ALLI), 280–300 (FSSL…IRVG), 316–336 (YTGI…SIIL), 357–377 (LMLF…GAGV), 387–407 (IFYI…YILG), and 418–438 (PQGF…MIFA).

This sequence belongs to the multi antimicrobial extrusion (MATE) (TC 2.A.66.1) family. MdtK subfamily.

The protein resides in the cell inner membrane. In terms of biological role, multidrug efflux pump that functions probably as a Na(+)/drug antiporter. The polypeptide is Multidrug resistance protein MdtK (Photorhabdus laumondii subsp. laumondii (strain DSM 15139 / CIP 105565 / TT01) (Photorhabdus luminescens subsp. laumondii)).